The chain runs to 1119 residues: uncharacterized protein (1119 aa).

Positions Met1–Phe21 are cleaved as a signal peptide. The stretch at Asn170–Ile206 forms a coiled coil. Disordered regions lie at residues Asn606–Asn627 and Ala782–Glu905. The segment covering Asp788 to Lys891 has biased composition (basic and acidic residues). Residues Asn890–Tyr920 are a coiled coil.

This is an uncharacterized protein from Plasmodium falciparum (isolate 3D7).